Reading from the N-terminus, the 93-residue chain is CRISPR-associated endoribonuclease Cas2 2 (93 aa).

D9 contributes to the Mg(2+) binding site.

Belongs to the CRISPR-associated endoribonuclease Cas2 protein family. Homodimer, forms a heterotetramer with a Cas1 homodimer. Requires Mg(2+) as cofactor.

Functionally, CRISPR (clustered regularly interspaced short palindromic repeat), is an adaptive immune system that provides protection against mobile genetic elements (viruses, transposable elements and conjugative plasmids). CRISPR clusters contain sequences complementary to antecedent mobile elements and target invading nucleic acids. CRISPR clusters are transcribed and processed into CRISPR RNA (crRNA). Functions as a ssRNA-specific endoribonuclease. Involved in the integration of spacer DNA into the CRISPR cassette. This Synechocystis sp. (strain ATCC 27184 / PCC 6803 / Kazusa) protein is CRISPR-associated endoribonuclease Cas2 2.